Here is a 191-residue protein sequence, read N- to C-terminus: UPF0149 protein VV2847 (191 aa).

It belongs to the UPF0149 family.

This is UPF0149 protein VV2847 from Vibrio vulnificus (strain YJ016).